The primary structure comprises 497 residues: NAD(P)H-quinone oxidoreductase chain 4, chloroplastic (497 aa).

The next 14 membrane-spanning stretches (helical) occupy residues 4 to 24 (FPWL…IFLF), 35 to 55 (YTVC…CYHF), 84 to 104 (GLSI…TLAA), 111 to 131 (CKLF…PFSS), 134 to 154 (ILLF…LLAM), 167 to 187 (FILY…GIGL), 208 to 228 (ALEI…SPII), 242 to 262 (HYST…YGLV), 274 to 294 (SIFC…AASA), 305 to 325 (IAYS…SISD), 330 to 350 (GAIL…FLSG), 386 to 406 (LALP…GIIT), 411 to 431 (FLIM…LTPI), and 463 to 483 (FISI…DFIF).

The protein belongs to the complex I subunit 4 family.

It is found in the plastid. The protein localises to the chloroplast thylakoid membrane. It carries out the reaction a plastoquinone + NADH + (n+1) H(+)(in) = a plastoquinol + NAD(+) + n H(+)(out). It catalyses the reaction a plastoquinone + NADPH + (n+1) H(+)(in) = a plastoquinol + NADP(+) + n H(+)(out). The polypeptide is NAD(P)H-quinone oxidoreductase chain 4, chloroplastic (ndhD) (Lotus japonicus (Lotus corniculatus var. japonicus)).